The chain runs to 291 residues: Acetyl-coenzyme A carboxylase carboxyl transferase subunit beta (291 aa).

A CoA carboxyltransferase N-terminal domain is found at 36 to 291; it reads MWVKCDGCGK…KILVIHGRGN (256 aa). Positions 40, 43, 59, and 62 each coordinate Zn(2+). The segment at 40-62 adopts a C4-type zinc-finger fold; that stretch reads CDGCGKVLYKNDMEKNNKVCYHC.

This sequence belongs to the AccD/PCCB family. As to quaternary structure, acetyl-CoA carboxylase is a heterohexamer composed of biotin carboxyl carrier protein (AccB), biotin carboxylase (AccC) and two subunits each of ACCase subunit alpha (AccA) and ACCase subunit beta (AccD). It depends on Zn(2+) as a cofactor.

Its subcellular location is the cytoplasm. The enzyme catalyses N(6)-carboxybiotinyl-L-lysyl-[protein] + acetyl-CoA = N(6)-biotinyl-L-lysyl-[protein] + malonyl-CoA. It functions in the pathway lipid metabolism; malonyl-CoA biosynthesis; malonyl-CoA from acetyl-CoA: step 1/1. Functionally, component of the acetyl coenzyme A carboxylase (ACC) complex. Biotin carboxylase (BC) catalyzes the carboxylation of biotin on its carrier protein (BCCP) and then the CO(2) group is transferred by the transcarboxylase to acetyl-CoA to form malonyl-CoA. This Clostridium kluyveri (strain NBRC 12016) protein is Acetyl-coenzyme A carboxylase carboxyl transferase subunit beta.